Here is a 255-residue protein sequence, read N- to C-terminus: Probable transcriptional regulatory protein CMS0715 (255 aa).

It belongs to the TACO1 family.

Its subcellular location is the cytoplasm. In Clavibacter sepedonicus (Clavibacter michiganensis subsp. sepedonicus), this protein is Probable transcriptional regulatory protein CMS0715.